Reading from the N-terminus, the 561-residue chain is Proline--tRNA ligase (561 aa).

The protein belongs to the class-II aminoacyl-tRNA synthetase family. ProS type 1 subfamily. Homodimer.

It is found in the cytoplasm. It catalyses the reaction tRNA(Pro) + L-proline + ATP = L-prolyl-tRNA(Pro) + AMP + diphosphate. Catalyzes the attachment of proline to tRNA(Pro) in a two-step reaction: proline is first activated by ATP to form Pro-AMP and then transferred to the acceptor end of tRNA(Pro). As ProRS can inadvertently accommodate and process non-cognate amino acids such as alanine and cysteine, to avoid such errors it has two additional distinct editing activities against alanine. One activity is designated as 'pretransfer' editing and involves the tRNA(Pro)-independent hydrolysis of activated Ala-AMP. The other activity is designated 'posttransfer' editing and involves deacylation of mischarged Ala-tRNA(Pro). The misacylated Cys-tRNA(Pro) is not edited by ProRS. This chain is Proline--tRNA ligase, found in Thermosipho africanus (strain TCF52B).